Consider the following 604-residue polypeptide: Prostaglandin G/H synthase 2 (604 aa).

Positions 1–17 (MLARALLLCAAVALSGA) are cleaved as a signal peptide. The EGF-like domain maps to 18-55 (ANPCCSHPCQNRGVCMSVGFDQYKCDCTRTGFYGENCT). Cystine bridges form between Cys-21–Cys-32, Cys-22–Cys-145, Cys-26–Cys-42, and Cys-44–Cys-54. Residue Asn-53 is glycosylated (N-linked (GlcNAc...) asparagine). Arg-106 contributes to the substrate binding site. Asn-130 carries N-linked (GlcNAc...) asparagine glycosylation. His-193 acts as the Proton acceptor in catalysis. Position 341 (Tyr-341) interacts with substrate. Residue Tyr-371 is the For cyclooxygenase activity of the active site. Position 374 (His-374) interacts with heme b. A glycan (N-linked (GlcNAc...) asparagine) is linked at Asn-396. Cys-526 bears the S-nitrosocysteine mark. A disulfide bridge links Cys-555 with Cys-561. The residue at position 565 (Ser-565) is an O-acetylserine. N-linked (GlcNAc...) asparagine glycosylation occurs at Asn-580.

Belongs to the prostaglandin G/H synthase family. In terms of assembly, homodimer. The cofactor is heme b. S-nitrosylation by NOS2 (iNOS) activates enzyme activity. S-nitrosylation may take place on different Cys residues in addition to Cys-526. In terms of processing, acetylated at Ser-565 by SPHK1. During neuroinflammation, acetylation by SPHK1 promotes neuronal secretion of specialized preresolving mediators (SPMs), especially 15-R-lipoxin A4, which results in an increase of phagocytic microglia.

The protein localises to the microsome membrane. Its subcellular location is the endoplasmic reticulum membrane. It is found in the nucleus inner membrane. It localises to the nucleus outer membrane. It carries out the reaction (5Z,8Z,11Z,14Z)-eicosatetraenoate + AH2 + 2 O2 = prostaglandin H2 + A + H2O. It catalyses the reaction (5Z,8Z,11Z,14Z)-eicosatetraenoate + 2 O2 = prostaglandin G2. The catalysed reaction is prostaglandin G2 + AH2 = prostaglandin H2 + A + H2O. The enzyme catalyses (5Z,8Z,11Z,14Z,17Z)-eicosapentaenoate + 2 O2 = prostaglandin G3. It carries out the reaction prostaglandin G3 + AH2 = prostaglandin H3 + A + H2O. It catalyses the reaction (8Z,11Z,14Z)-eicosatrienoate + 2 O2 = prostaglandin G1. The catalysed reaction is prostaglandin G1 + AH2 = prostaglandin H1 + A + H2O. The enzyme catalyses 2-(5Z,8Z,11Z,14Z)-eicosatetraenoyl-sn-glycero-3-phosphoethanolamine + 2 O2 = 2-(prostaglandin G2)-sn-glycero-3-phosphoethanolamine. It carries out the reaction 2-(prostaglandin G2)-sn-glycero-3-phosphoethanolamine + AH2 = 2-(prostaglandin H2)-sn-glycero-3-phosphoethanolamine + A + H2O. It catalyses the reaction 2-(5Z,8Z,11Z,14Z)-eicosatetraenoyl-sn-glycero-3-phosphocholine + 2 O2 = 2-(prostaglandin G2)-sn-glycero-3-phosphocholine. The catalysed reaction is 2-(prostaglandin G2)-sn-glycero-3-phosphocholine + AH2 = 2-(prostaglandin H2)-sn-glycero-3-phosphocholine + A + H2O. The enzyme catalyses (15S)-hydroperoxy-(5Z,8Z,11Z,13E)-eicosatetraenoate + AH2 = (15S)-hydroxy-(5Z,8Z,11Z,13E)-eicosatetraenoate + A + H2O. It carries out the reaction 2-(5Z,8Z,11Z,14Z)-eicosatetraenoyl-sn-glycero-3-phosphocholine + AH2 + O2 = 2-[(15S)-hydroxy-(5Z,8Z,11Z,13E)-eicosatetraenoyl]-sn-glycero-3-phosphocholine + A + H2O. It catalyses the reaction 2-(5Z,8Z,11Z,14Z)-eicosatetraenoyl-sn-glycero-3-phosphocholine + AH2 + O2 = 2-[(15R)-hydroxy-(5Z,8Z,11Z,13E)-eicosatetraenoyl]-sn-glycero-3-phosphocholine + A + H2O. The catalysed reaction is 2-(5Z,8Z,11Z,14Z)-eicosatetraenoyl-sn-glycero-3-phosphocholine + AH2 + O2 = 2-[(11R)-hydroxy-(5Z,8Z,12E,14Z)-eicosatetraenoyl]-sn-glycero-3-phosphocholine + A + H2O. The enzyme catalyses (9Z,12Z)-octadecadienoate + AH2 + O2 = 9-hydroxy-(10E,12Z)-octadecadienoate + A + H2O. It carries out the reaction (9Z,12Z)-octadecadienoate + AH2 + O2 = 13-hydroxy-(9Z,11E)-octadecadienoate + A + H2O. It catalyses the reaction (5Z,8Z,11Z,14Z)-eicosatetraenoate + AH2 + O2 = (15R)-hydroxy-(5Z,8Z,11Z,13E)-eicosatetraenoate + A + H2O. The catalysed reaction is (5Z,8Z,11Z,14Z)-eicosatetraenoate + AH2 + O2 = (11R)-hydroxy-(5Z,8Z,12E,14Z)-eicosatetraenoate + A + H2O. The enzyme catalyses (5Z,8Z,11Z,14Z,17Z)-eicosapentaenoate + AH2 + O2 = (11R)-hydroxy-(5Z,8Z,12E,14Z,17Z)-eicosapentaenoate + A + H2O. It carries out the reaction (5Z,8Z,11Z,14Z,17Z)-eicosapentaenoate + AH2 + O2 = (18S)-hydroxy-(5Z,8Z,11Z,14Z,16E)-eicosapentaenoate + A + H2O. It catalyses the reaction (5Z,8Z,11Z,14Z,17Z)-eicosapentaenoate + AH2 + O2 = (18R)-hydroxy-(5Z,8Z,11Z,14Z,16E)-eicosapentaenoate + A + H2O. The catalysed reaction is (5Z,8Z,11Z,14Z,17Z)-eicosapentaenoate + AH2 + O2 = (15R)-hydroxy-(5Z,8Z,11Z,13E,17Z)-eicosapentaenoate + A + H2O. The enzyme catalyses (5Z,8Z,11Z,14Z,17Z)-eicosapentaenoate + AH2 + O2 = (15S)-hydroxy-(5Z,8Z,11Z,13E,17Z)-eicosapentaenoate + A + H2O. It carries out the reaction (7Z,10Z,13Z,16Z,19Z)-docosapentaenoate + AH2 + O2 = 13R-hydroxy-(7Z,10Z,14E,16Z,19Z)-docosapentaenoate + A + H2O. It catalyses the reaction (4Z,7Z,10Z,13Z,16Z,19Z)-docosahexaenoate + AH2 + O2 = 13-hydroxy-(4Z,7Z,10Z,14E,16Z,19Z)-docosahexaenoate + A + H2O. The catalysed reaction is (5S)-hydroxy-(6E,8Z,11Z,14Z)-eicosatetraenoate + AH2 + O2 = (5S,15R)-dihydroxy-(6E,8Z,11Z,13E)-eicosatetraenoate + A + H2O. The enzyme catalyses (4Z,7Z,10Z,13Z,16Z,19Z)-docosahexaenoate + AH2 + O2 = 17R-hydroxy-(4Z,7Z,10Z,13Z,15E,19Z)-docosahexaenoate + A + H2O. It carries out the reaction (5S)-hydroxy-(6E,8Z,11Z,14Z)-eicosatetraenoate + AH2 + O2 = (5S,15S)-dihydroxy-(6E,8Z,11Z,13E)-eicosatetraenoate + A + H2O. It catalyses the reaction (5S)-hydroxy-(6E,8Z,11Z,14Z)-eicosatetraenoate + AH2 + O2 = (5S,11R)-dihydroxy-(6E,8Z,12E,14Z)-eicosatetraenoate + A + H2O. The catalysed reaction is 2-(5Z,8Z,11Z,14Z-eicosatetraenoyl)-glycerol + 2 O2 = 2-glyceryl-prostaglandin G2. The enzyme catalyses 2-glyceryl-prostaglandin G2 + AH2 = 2-glyceryl-prostaglandin H2 + A + H2O. It carries out the reaction (5Z,8Z,11Z,14Z)-eicosatetraenoate + O2 = (15R)-hydroperoxy-(5Z,8Z,11Z,13E)-eicosatetraenoate. It catalyses the reaction (5Z,8Z,11Z,14Z)-eicosatetraenoate + O2 = 11R-hydroperoxy-(5Z,8Z,12E,14Z)-eicosatetraenoate. The catalysed reaction is (9Z,12Z)-octadecadienoate + AH2 + O2 = (9R)-hydroxy-(10E,12Z)-octadecadienoate + A + H2O. The enzyme catalyses (9Z,12Z)-octadecadienoate + AH2 + O2 = (9S)-hydroxy-(10E,12Z)-octadecadienoate + A + H2O. It carries out the reaction (9Z,12Z)-octadecadienoate + AH2 + O2 = (13S)-hydroxy-(9Z,11E)-octadecadienoate + A + H2O. It catalyses the reaction (9Z,12Z)-octadecadienoate + AH2 + O2 = (13R)-hydroxy-(9Z,11E)-octadecadienoate + A + H2O. Its pathway is lipid metabolism; prostaglandin biosynthesis. In terms of biological role, dual cyclooxygenase and peroxidase in the biosynthesis pathway of prostanoids, a class of C20 oxylipins mainly derived from arachidonate ((5Z,8Z,11Z,14Z)-eicosatetraenoate, AA, C20:4(n-6)), with a particular role in the inflammatory response. The cyclooxygenase activity oxygenates AA to the hydroperoxy endoperoxide prostaglandin G2 (PGG2), and the peroxidase activity reduces PGG2 to the hydroxy endoperoxide prostaglandin H2 (PGH2), the precursor of all 2-series prostaglandins and thromboxanes. This complex transformation is initiated by abstraction of hydrogen at carbon 13 (with S-stereochemistry), followed by insertion of molecular O2 to form the endoperoxide bridge between carbon 9 and 11 that defines prostaglandins. The insertion of a second molecule of O2 (bis-oxygenase activity) yields a hydroperoxy group in PGG2 that is then reduced to PGH2 by two electrons. Similarly catalyzes successive cyclooxygenation and peroxidation of dihomo-gamma-linoleate (DGLA, C20:3(n-6)) and eicosapentaenoate (EPA, C20:5(n-3)) to corresponding PGH1 and PGH3, the precursors of 1- and 3-series prostaglandins. In an alternative pathway of prostanoid biosynthesis, converts 2-arachidonoyl lysophopholipids to prostanoid lysophopholipids, which are then hydrolyzed by intracellular phospholipases to release free prostanoids. Metabolizes 2-arachidonoyl glycerol yielding the glyceryl ester of PGH2, a process that can contribute to pain response. Generates lipid mediators from n-3 and n-6 polyunsaturated fatty acids (PUFAs) via a lipoxygenase-type mechanism. Oxygenates PUFAs to hydroperoxy compounds and then reduces them to corresponding alcohols. Plays a role in the generation of resolution phase interaction products (resolvins) during both sterile and infectious inflammation. Metabolizes docosahexaenoate (DHA, C22:6(n-3)) to 17R-HDHA, a precursor of the D-series resolvins (RvDs). As a component of the biosynthetic pathway of E-series resolvins (RvEs), converts eicosapentaenoate (EPA, C20:5(n-3)) primarily to 18S-HEPE that is further metabolized by ALOX5 and LTA4H to generate 18S-RvE1 and 18S-RvE2. In vascular endothelial cells, converts docosapentaenoate (DPA, C22:5(n-3)) to 13R-HDPA, a precursor for 13-series resolvins (RvTs) shown to activate macrophage phagocytosis during bacterial infection. In activated leukocytes, contributes to oxygenation of hydroxyeicosatetraenoates (HETE) to diHETES (5,15-diHETE and 5,11-diHETE). Can also use linoleate (LA, (9Z,12Z)-octadecadienoate, C18:2(n-6)) as substrate and produce hydroxyoctadecadienoates (HODEs) in a regio- and stereospecific manner, being (9R)-HODE ((9R)-hydroxy-(10E,12Z)-octadecadienoate) and (13S)-HODE ((13S)-hydroxy-(9Z,11E)-octadecadienoate) its major products. During neuroinflammation, plays a role in neuronal secretion of specialized preresolving mediators (SPMs) 15R-lipoxin A4 that regulates phagocytic microglia. This chain is Prostaglandin G/H synthase 2 (PTGS2), found in Bos taurus (Bovine).